The sequence spans 200 residues: dITP/XTP pyrophosphatase (200 aa).

Substrate is bound at residue 19 to 24; that stretch reads TSNAGK. Mg(2+) contacts are provided by glutamate 49 and aspartate 78. Catalysis depends on aspartate 78, which acts as the Proton acceptor. Substrate is bound by residues serine 79, 158 to 161, lysine 181, and 186 to 187; these read FGYD and HR.

The protein belongs to the HAM1 NTPase family. In terms of assembly, homodimer. Requires Mg(2+) as cofactor.

The catalysed reaction is XTP + H2O = XMP + diphosphate + H(+). The enzyme catalyses dITP + H2O = dIMP + diphosphate + H(+). It carries out the reaction ITP + H2O = IMP + diphosphate + H(+). Pyrophosphatase that catalyzes the hydrolysis of nucleoside triphosphates to their monophosphate derivatives, with a high preference for the non-canonical purine nucleotides XTP (xanthosine triphosphate), dITP (deoxyinosine triphosphate) and ITP. Seems to function as a house-cleaning enzyme that removes non-canonical purine nucleotides from the nucleotide pool, thus preventing their incorporation into DNA/RNA and avoiding chromosomal lesions. The sequence is that of dITP/XTP pyrophosphatase from Deinococcus radiodurans (strain ATCC 13939 / DSM 20539 / JCM 16871 / CCUG 27074 / LMG 4051 / NBRC 15346 / NCIMB 9279 / VKM B-1422 / R1).